The chain runs to 161 residues: Large ribosomal subunit protein uL15 (161 aa).

Positions 1–39 are disordered; the sequence is MTKLNELAPREGSTKGRMRVGRGPGSGKGKTAGRGVKGQ. Residues 22–36 are compositionally biased toward gly residues; it reads RGPGSGKGKTAGRGV.

The protein belongs to the universal ribosomal protein uL15 family. As to quaternary structure, part of the 50S ribosomal subunit.

Functionally, binds to the 23S rRNA. This is Large ribosomal subunit protein uL15 from Caulobacter vibrioides (strain ATCC 19089 / CIP 103742 / CB 15) (Caulobacter crescentus).